We begin with the raw amino-acid sequence, 5125 residues long: Usherin (5125 aa).

The first 33 residues, 1-33 (MYYLALSSGFLGQAIKTSILAYLASVLLAASQG), serve as a signal peptide directing secretion. N-linked (GlcNAc...) asparagine glycans are attached at residues Asn-120, Asn-229, Asn-257, Asn-273, Asn-414, Asn-447, and Asn-468. A Laminin N-terminal domain is found at 273 to 513 (NVSLTNREIL…AVDEITIIGR (241 aa)). 39 cysteine pairs are disulfide-bonded: Cys-514/Cys-523, Cys-516/Cys-532, Cys-534/Cys-545, Cys-548/Cys-568, Cys-571/Cys-580, Cys-573/Cys-601, Cys-604/Cys-613, Cys-616/Cys-634, Cys-637/Cys-651, Cys-639/Cys-658, Cys-660/Cys-669, Cys-672/Cys-687, Cys-690/Cys-704, Cys-692/Cys-711, Cys-713/Cys-722, Cys-725/Cys-740, Cys-743/Cys-755, Cys-745/Cys-762, Cys-764/Cys-773, Cys-776/Cys-788, Cys-791/Cys-804, Cys-793/Cys-811, Cys-813/Cys-822, Cys-825/Cys-840, Cys-843/Cys-857, Cys-845/Cys-864, Cys-866/Cys-875, Cys-878/Cys-893, Cys-896/Cys-909, Cys-898/Cys-916, Cys-918/Cys-927, Cys-930/Cys-944, Cys-947/Cys-959, Cys-949/Cys-966, Cys-981/Cys-995, Cys-998/Cys-1010, Cys-1000/Cys-1017, Cys-1019/Cys-1028, and Cys-1031/Cys-1046. Laminin EGF-like domains lie at 514-570 (CQCH…NCKP), 571-636 (CQCH…VCKH), 637-689 (CDCN…CCRP), 690-742 (CDCN…GCEP), 743-790 (CHCN…ACEV), 791-842 (CDCN…LCLP), 843-895 (CNCE…GCQA), 896-946 (CDCD…GCLP), 947-997 (CLCH…RCRP), and 998-1048 (CHCH…ACSK). A glycan (N-linked (GlcNAc...) asparagine) is linked at Asn-646. N-linked (GlcNAc...) asparagine glycosylation is found at Asn-835 and Asn-852. Asn-884 carries an N-linked (GlcNAc...) asparagine glycan. Asn-940 carries an N-linked (GlcNAc...) asparagine glycan. Asn-1007 carries an N-linked (GlcNAc...) asparagine glycan. Fibronectin type-III domains follow at residues 1054–1142 (PPPR…TKPE), 1146–1240 (GHLN…APPQ), 1241–1356 (RQEP…SAPV), and 1357–1461 (FMAA…AAPA). Residues Asn-1067, Asn-1149, Asn-1170, Asn-1221, Asn-1304, and Asn-1381 are each glycosylated (N-linked (GlcNAc...) asparagine). 2 consecutive Laminin G-like domains span residues 1510 to 1697 (TKGT…WEGC) and 1702 to 1879 (EEGV…QDGC). 2 disulfide bridges follow: Cys-1660-Cys-1697 and Cys-1850-Cys-1879. 29 consecutive Fibronectin type-III domains span residues 1857-1943 (TRGA…SAPH), 1945-2042 (VPTP…TPQE), 2043-2132 (APQE…LPPE), 2133-2230 (RVDP…TVPE), 2231-2318 (GVPA…APPE), 2319-2421 (GTVN…MPPG), 2425-2519 (GLLS…TTED), 2520-2613 (KPGP…TPEG), 2614-2709 (IPGP…TRPS), 2713-2806 (GVQP…THPA), 2807-2910 (LPQE…TLAG), 2914-3005 (RGAT…TWEE), 3009-3099 (GMRP…TPSG), 3380-3485 (ATEE…TRED), 3486-3577 (VPQG…TRGV), 3580-3670 (SVPP…AAPQ), 3672-3762 (VWVT…TPED), 3765-3852 (PPCN…TLEA), 3853-3950 (APVG…TLEA), 3951-4054 (PPQD…SAPS), 4055-4143 (GLMN…APPD), 4144-4251 (SQMA…APPD), 4252-4344 (GLSP…ASPA), 4345-4432 (GVSP…APPE), 4433-4517 (DMDP…TSPS), 4518-4620 (APSG…IPPL), 4625-4720 (PHLE…TGPA), 4721-4813 (PPEG…THPA), and 4814-4916 (PPSG…TKKE). The segment at 1930 to 1950 (SDWSRGRTLGSAPHSVPTPSR) is disordered.

As to quaternary structure, interacts with collagen IV and fibronectin via its laminin EGF-like domains. Interaction with collagen may be required for stable integration into the basement membrane. Interacts with NINL. Interacts with USH1C. Interacts (via the cytoplasmic region) with PDZD7. Component of USH2 complex, composed of ADGRV1, PDZD7, USH2A and WHRN. Interacts with ADGRV1/MASS1 (via N-terminal PDZ domain). Interacts (via the cytoplasmic region) with WHRN. Interacts (via the cytoplasmic region) with VEZT and MYO7A (via MyTH4-FERM domains); the interaction associates VEZT with the USH2 complex at the stereocilia base. In terms of tissue distribution, present in the synaptic terminals of inner ear hair cells (at protein level). Predominantly expressed in the retina and cochlea. Weakly expressed in brain and kidney. Detectable from E17 in the neural epithelium, but not in the retinal pigment epithelium (RPE) of the developing retina. After birth, it is expressed at P7 and remains expressed during adulthood.

It localises to the secreted. The protein resides in the cell projection. Its subcellular location is the stereocilium membrane. It is found in the photoreceptor inner segment. Its function is as follows. Involved in hearing and vision as member of the USH2 complex. In the inner ear, required for the hair bundle ankle formation, which connects growing stereocilia in developing cochlear hair cells. In retina photoreceptors, the USH2 complex is required for the maintenance of periciliary membrane complex that seems to play a role in regulating intracellular protein transport. The protein is Usherin (Ush2a) of Rattus norvegicus (Rat).